The following is a 242-amino-acid chain: Small ribosomal subunit protein uS2 (242 aa).

Belongs to the universal ribosomal protein uS2 family.

The chain is Small ribosomal subunit protein uS2 from Vibrio vulnificus (strain CMCP6).